A 275-amino-acid chain; its full sequence is MKKVGVIGGGAWGTALALTARRAGRDVVLWAREPQVVDDINVRHVNSDFLPGIDLDPALRATVDLADAADADAVLLVSPAQHLRAAARALAPHWRAGVPAVICSKGIELSTCALMQDAIAAELPQAPIAVLSGPTFAIEVARGLPTAITLACAAPELGRKLVEALGTASFRPYLSDDLVGAQIGGAVKNVLAIACGIVEGRGLGDNARAALITRGLAEMTRLAMAKGGRPETLMGLSGLGDLILTASSTQSRNYSWASPWARAAPWPTSWASAIR.

NADPH contacts are provided by Trp-12, Arg-32, and Lys-105. Sn-glycerol 3-phosphate is bound by residues Lys-105, Gly-133, and Thr-135. Ala-137 lines the NADPH pocket. The sn-glycerol 3-phosphate site is built by Lys-188, Asp-241, Ser-251, Arg-252, and Asn-253. Lys-188 (proton acceptor) is an active-site residue. Arg-252 contacts NADPH.

The protein belongs to the NAD-dependent glycerol-3-phosphate dehydrogenase family.

Its subcellular location is the cytoplasm. The enzyme catalyses sn-glycerol 3-phosphate + NAD(+) = dihydroxyacetone phosphate + NADH + H(+). It catalyses the reaction sn-glycerol 3-phosphate + NADP(+) = dihydroxyacetone phosphate + NADPH + H(+). The protein operates within membrane lipid metabolism; glycerophospholipid metabolism. Its function is as follows. Catalyzes the reduction of the glycolytic intermediate dihydroxyacetone phosphate (DHAP) to sn-glycerol 3-phosphate (G3P), the key precursor for phospholipid synthesis. The protein is Glycerol-3-phosphate dehydrogenase [NAD(P)+] of Paramagnetospirillum magneticum (strain ATCC 700264 / AMB-1) (Magnetospirillum magneticum).